The following is a 339-amino-acid chain: Fructose-1,6-bisphosphatase class 1 (339 aa).

4 residues coordinate Mg(2+): glutamate 101, aspartate 120, leucine 122, and aspartate 123. Residues aspartate 123 to serine 126, asparagine 215, and lysine 281 each bind substrate. Glutamate 287 contacts Mg(2+).

It belongs to the FBPase class 1 family. Homotetramer. It depends on Mg(2+) as a cofactor.

It localises to the cytoplasm. The catalysed reaction is beta-D-fructose 1,6-bisphosphate + H2O = beta-D-fructose 6-phosphate + phosphate. It participates in carbohydrate biosynthesis; gluconeogenesis. This chain is Fructose-1,6-bisphosphatase class 1, found in Polynucleobacter necessarius subsp. necessarius (strain STIR1).